The sequence spans 531 residues: Acid-sensing ion channel 3 (531 aa).

Residues 1-43 (MKPTSGPEEARRPASDIRVFASNCSMHGLGHVFGPGSLSLRRG) lie on the Cytoplasmic side of the membrane. A helical transmembrane segment spans residues 44–61 (MWAAAVVLSVATFLYQVA). Topologically, residues 62 to 441 (ERVRYYREFH…SELLGDIGGQ (380 aa)) are extracellular. 7 disulfide bridges follow: C92-C186, C164-C171, C282-C370, C315-C366, C319-C364, C328-C350, and C330-C342. N175 carries N-linked (GlcNAc...) asparagine glycosylation. The segment at 285–307 (ASLNPNYEPEPSDPLGSPSPSPS) is disordered. N-linked (GlcNAc...) asparagine glycosylation is present at N398. A helical membrane pass occupies residues 442-460 (MGLFIGASLLTILEILDYL). The GAS motif; ion selectivity filter signature appears at 447–449 (GAS). The Cytoplasmic segment spans residues 461-531 (CEVFRDKVLG…HRTCYLVTQL (71 aa)). The short motif at 528–531 (VTQL) is the PDZ-binding element.

It belongs to the amiloride-sensitive sodium channel (TC 1.A.6) family. ASIC3 subfamily. Can form homotrimeric channels. Heterotrimer; forms functional heterotrimers producing channel with different properties. Forms heterotrimers with ASIC2; gives rise to a biphasic current with a sustained current which discriminates poorly between Na(+) and K(+). Interacts with STOM; inhibits ASIC3 acid-evoked current. Interacts with LIN7B (via PDZ domain); increases ASIC3 expression at the plasma membrane. Interacts with MAGI1 (via PDZ domain); probably regulates ASIC3. Interacts with GOPC (via PDZ domain); probably regulates ASIC3. Interacts with DLG4 (via PDZ domain); reduces ASIC3 expression at the plasma membrane. Expressed by sensory neurons. Strongly expressed in brain, spinal cord, lung, lymph nodes, kidney, pituitary, heart and testis.

Its subcellular location is the cell membrane. It is found in the cytoplasm. The catalysed reaction is Na(+)(in) = Na(+)(out). It carries out the reaction K(+)(in) = K(+)(out). It catalyses the reaction Ca(2+)(in) = Ca(2+)(out). With respect to regulation, inhibited by the diuretic drug amiloride. Inhibited by the diuretic drug triamterene. Potentiated by the vertebrate neuropeptide FF (NPFF) and the related FMRFamide. Specifically and reversibly inhibited by the a sea anemone toxin APETx2. Its function is as follows. Forms pH-gated heterotrimeric sodium channels that act as postsynaptic excitatory receptors in the nervous system. Upon extracellular acidification, these channels generate a biphasic current with a fast inactivating and a slow sustained phase. ASIC3 is more sensitive to protons and gates between closed, open, and desensitized states faster than other ASICs. Displays high selectivity for sodium ions but can also permit the permeation of other cations. As a neuronal acid sensor, probably contributes to mechanoreception, acid nociception, and heat nociception. By forming heterotrimeric channels with ASIC2, generates a biphasic current with a fast inactivating and a slow sustained phase, which in sensory neurons is proposed to mediate the pain induced by acidosis that occurs in ischemic, damaged or inflamed tissues. The protein is Acid-sensing ion channel 3 of Homo sapiens (Human).